Consider the following 343-residue polypeptide: Glucokinase (343 aa).

An ATP-binding site is contributed by 18-23; sequence GDIGGT.

Belongs to the bacterial glucokinase family.

It localises to the cytoplasm. The catalysed reaction is D-glucose + ATP = D-glucose 6-phosphate + ADP + H(+). The polypeptide is Glucokinase (Brucella abortus (strain 2308)).